A 166-amino-acid polypeptide reads, in one-letter code: UPF0336 protein ML2425 (166 aa).

Residues 10 to 131 (LIGKHYRQLD…VIAEVRSEVT (122 aa)) form the MaoC-like domain.

It belongs to the UPF0336 family.

This is UPF0336 protein ML2425 from Mycobacterium leprae (strain TN).